Reading from the N-terminus, the 489-residue chain is Cytochrome P450 2C41 (489 aa).

Residue cysteine 434 participates in heme binding.

Belongs to the cytochrome P450 family. Heme serves as cofactor.

Its subcellular location is the endoplasmic reticulum membrane. The protein localises to the microsome membrane. It catalyses the reaction an organic molecule + reduced [NADPH--hemoprotein reductase] + O2 = an alcohol + oxidized [NADPH--hemoprotein reductase] + H2O + H(+). Functionally, cytochromes P450 are a group of heme-thiolate monooxygenases. In liver microsomes, this enzyme is involved in an NADPH-dependent electron transport pathway. It oxidizes a variety of structurally unrelated compounds, including steroids, fatty acids, and xenobiotics. The chain is Cytochrome P450 2C41 (CYP2C41) from Canis lupus familiaris (Dog).